A 434-amino-acid polypeptide reads, in one-letter code: Putative polysaccharide biosynthesis protein with aminopeptidase-like domain (434 aa).

2 aminopeptidase-like regions span residues 1-55 (MEEI…IHEV) and 57-355 (SGTK…IENN). The tract at residues 56 to 164 (KSGTKVFDWT…VVIDSSLEDG (109 aa)) is insert. Residues histidine 189, aspartate 195, and histidine 324 each contribute to the Zn(2+) site. The interval 356 to 434 (RTYLNLNPKC…LYRVELLKLV (79 aa)) is permutated winged helix-turn-helix.

Belongs to the UPF0770 family. As to quaternary structure, homotrimer. Requires Zn(2+) as cofactor.

Its function is as follows. The genomic context suggests a role in the biosynthesis of modified polysaccharides; this association with genes involved in carbohydrate metabolism is observed in several phylogenetically distinct taxa. Is not expected to have peptidase activity despite low similarity to aminopeptidases. In Clostridium acetobutylicum (strain ATCC 824 / DSM 792 / JCM 1419 / IAM 19013 / LMG 5710 / NBRC 13948 / NRRL B-527 / VKM B-1787 / 2291 / W), this protein is Putative polysaccharide biosynthesis protein with aminopeptidase-like domain.